Reading from the N-terminus, the 100-residue chain is MAKKSMIEREKKRLKFVTKFKQKRYDLKKQIKKAEFLEEKLSLYAKLQKLPRNSSAVRLHNRCLISGRPKGYYRDFGLSRHVLREFGHNCLLPGLTKSSW.

Belongs to the universal ribosomal protein uS14 family. In terms of assembly, part of the 30S ribosomal subunit.

It is found in the plastid. The protein resides in the chloroplast. Its function is as follows. Binds 16S rRNA, required for the assembly of 30S particles. In Tupiella akineta (Green alga), this protein is Small ribosomal subunit protein uS14c.